The primary structure comprises 327 residues: MKFLDQVKIYVKAGNGGHGSPSFRREKFIEYGGPDGGDGGKGGTIYLRSERNLNTLIDYRFQQHHKAGRGVNGSGQNRTGHSGEDLILKVPIGTQVFEEDNKTLIYDFKKEGEEFIVANGGKGGLGNTRFKSSTNRAPKKFTKGAPGEEYVIWLQLKTIADVGIVGLPNAGKSSLLASITNAMPKIANYKFTTLNPNLGVASYDDKEITLADIPGLVEGAHEGVGLGIQFLKHIERCKTLMHLIDITDEDLENTYKQVRNELGSYSKDLLEKKEIIVLNKTDLLEEEEVKEILKNFSKNKDSEVVTLSTLEKGSISRIKAKLLSYVS.

In terms of domain architecture, Obg spans 1-159 (MKFLDQVKIY…YVIWLQLKTI (159 aa)). Residues 160 to 327 (ADVGIVGLPN…IKAKLLSYVS (168 aa)) form the OBG-type G domain. Residues 166-173 (GLPNAGKS), 191-195 (FTTLN), 212-215 (DIPG), 279-282 (NKTD), and 308-310 (STL) contribute to the GTP site. Mg(2+)-binding residues include Ser173 and Thr193.

It belongs to the TRAFAC class OBG-HflX-like GTPase superfamily. OBG GTPase family. As to quaternary structure, monomer. It depends on Mg(2+) as a cofactor.

The protein resides in the cytoplasm. In terms of biological role, an essential GTPase which binds GTP, GDP and possibly (p)ppGpp with moderate affinity, with high nucleotide exchange rates and a fairly low GTP hydrolysis rate. Plays a role in control of the cell cycle, stress response, ribosome biogenesis and in those bacteria that undergo differentiation, in morphogenesis control. This chain is GTPase Obg, found in Pelagibacter ubique (strain HTCC1062).